The following is a 595-amino-acid chain: Estrogen receptor (595 aa).

The interval Met-1–Tyr-184 is modulating(transactivation AF-1); mediates interaction with MACROD1. Ser-10 carries an O-linked (GlcNAc) serine glycan. Residues Leu-35–Ser-47 form a required for interaction with NCOA1 region. Positions Leu-35–Met-174 are interaction with DDX5; self-association. A phosphoserine; by CDK2 mark is found at Ser-103 and Ser-105. Ser-118 carries the post-translational modification Phosphoserine. Residues Asp-143–Met-174 are disordered. Over residues Ser-154–Leu-165 the composition is skewed to basic and acidic residues. Ser-167 bears the Phosphoserine; by CK2 mark. NR C4-type zinc fingers lie at residues Cys-185–Cys-205 and Cys-221–Cys-245. Positions Cys-185–Met-250 form a DNA-binding region, nuclear receptor. Residues Cys-185 to Leu-310 form a mediates interaction with DNTTIP2 region. The hinge stretch occupies residues Met-251 to Leu-310. Arg-260 is modified (asymmetric dimethylarginine; by PRMT1). The segment covering Arg-260 to Arg-269 has biased composition (basic residues). A disordered region spans residues Arg-260–Asp-285. Positions Gly-262–Ile-595 are interaction with AKAP13. Residues Met-264–Ile-595 are self-association. Residues Thr-311–His-547 form the NR LBD domain. Residues Thr-311–Ile-595 form a transactivation AF-2 region. Residues Glu-353 and Arg-394 each coordinate 17beta-estradiol. The S-palmitoyl cysteine moiety is linked to residue Cys-447. 17beta-estradiol is bound at residue His-524. Tyr-537 carries the post-translational modification Phosphotyrosine; by Tyr-kinases. Positions Ser-554–Ser-578 are disordered. Over residues Ser-564 to Ser-578 the composition is skewed to low complexity. O-linked (GlcNAc) threonine glycosylation occurs at Thr-571.

This sequence belongs to the nuclear hormone receptor family. NR3 subfamily. As to quaternary structure, binds DNA as a homodimer. Can form a heterodimer with ESR2. Interacts with coactivator NCOA5. Interacts with PELP1, the interaction is enhanced by 17-beta-estradiol; the interaction increases ESR1 transcriptional activity. Interacts with NCOA7; the interaction is ligand-inducible. Interacts with AKAP13, CUEDC2, HEXIM1, KDM5A, MAP1S, SMARD1, and UBE1C. Interacts with MUC1; the interaction is stimulated by 7 beta-estradiol (E2) and enhances ESR1-mediated transcription. Interacts with DNTTIP2, and UIMC1. Interacts with KMT2D/MLL2. Interacts with ATAD2; the interaction is enhanced by estradiol. Interacts with KIF18A and LDB1. Interacts with RLIM (via its C-terminus). Interacts with MACROD1. Interacts with SH2D4A and PLCG. Interacts with SH2D4A; the interaction blocks binding to PLCG and inhibits estrogen-induced cell proliferation. Interacts with DYNLL1. Interacts with CCDC62; the interaction requires estradiol and appears to enhance the transcription of target genes. Interacts with NR2C1; the interaction prevents homodimerization of ESR1 and suppresses its transcriptional activity and cell growth. Interacts with DNAAF4. Interacts with PRMT2. Interacts with RBFOX2. Interacts with EP300; the interaction is estrogen-dependent and enhanced by CITED1. Interacts with CITED1; the interaction is estrogen-dependent. Interacts with FAM120B, FOXL2, PHB2 and SLC30A9. Interacts with coactivators NCOA3 and NCOA6. Interacts with STK3/MST2 only in the presence of SAV1 and vice-versa. Binds to CSNK1D. Interacts with NCOA2; NCOA2 can interact with ESR1 AF-1 and AF-2 domains simultaneously and mediate their transcriptional synergy. Interacts with DDX5. Interacts with NCOA1; the interaction seems to require a self-association of N-terminal and C-terminal regions. Interacts with ZNF366, DDX17, NFKB1, RELA, SP1 and SP3. Interacts with NRIP1. Interacts with GPER1; the interaction occurs in an estrogen-dependent manner. Interacts with CLOCK and the interaction is stimulated by estrogen. Interacts with TRIP4 (ufmylated); estrogen dependent. Interacts with LMTK3; the interaction phosphorylates ESR1 (in vitro) and protects it against proteasomal degradation. Interacts with CCAR2 (via N-terminus) in a ligand-independent manner. Interacts with ZFHX3. Interacts with SFR1 in a ligand-dependent and -independent manner. Interacts with DCAF13, LATS1 and DCAF1; regulates ESR1 ubiquitination and ubiquitin-mediated proteasomal degradation. Interacts (via DNA-binding domain) with POU4F2 (C-terminus); this interaction increases the estrogen receptor ESR1 transcriptional activity in a DNA- and ligand 17-beta-estradiol-independent manner. Interacts with ESRRB isoform 1. Interacts with UBE3A and WBP2. Interacts with GTF2B. Interacts with RBM39. In the absence of hormonal ligand, interacts with TACC1. Interacts with PI3KR1 or PI3KR2 and PTK2/FAK1. Interacts with SRC. Interacts with BAG1; the interaction is promoted in the absence of estradiol (17-beta-estradiol/E2). Interacts with and ubiquitinated by STUB1; the interaction is promoted in the absence of estradiol (17-beta-estradiol/E2). Interacts with NEDD8. Post-translationally, ubiquitinated; regulated by LATS1 via DCAF1 it leads to ESR1 proteasomal degradation. Deubiquitinated by OTUB1. Ubiquitinated by STUB1/CHIP; in the CA1 hippocampal region following loss of endogenous circulating estradiol (17-beta-estradiol/E2). Ubiquitinated by UBR5, leading to its degradation: UBR5 specifically recognizes and binds ligand-bound ESR1 when it is not associated with coactivators (NCOAs). In presence of NCOAs, the UBR5-degron is not accessible, preventing its ubiquitination and degradation. Phosphorylated by cyclin A/CDK2 and CK1. Phosphorylation probably enhances transcriptional activity. Dephosphorylation at Ser-118 by PPP5C inhibits its transactivation activity. Phosphorylated by LMTK3 (in vitro). In terms of processing, palmitoylated at Cys-447 by ZDHHC7 and ZDHHC21. Palmitoylation is required for plasma membrane targeting and for rapid intracellular signaling via ERK and AKT kinases and cAMP generation, but not for signaling mediated by the nuclear hormone receptor. Post-translationally, dimethylated by PRMT1 at Arg-260. The methylation may favor cytoplasmic localization. Demethylated by JMJD6 at Arg-260.

The protein localises to the nucleus. It localises to the cytoplasm. Its subcellular location is the golgi apparatus. The protein resides in the cell membrane. Its function is as follows. Nuclear hormone receptor. The steroid hormones and their receptors are involved in the regulation of eukaryotic gene expression and affect cellular proliferation and differentiation in target tissues. Ligand-dependent nuclear transactivation involves either direct homodimer binding to a palindromic estrogen response element (ERE) sequence or association with other DNA-binding transcription factors, such as AP-1/c-Jun, c-Fos, ATF-2, Sp1 and Sp3, to mediate ERE-independent signaling. Ligand binding induces a conformational change allowing subsequent or combinatorial association with multiprotein coactivator complexes through LXXLL motifs of their respective components. Mutual transrepression occurs between the estrogen receptor (ER) and NF-kappa-B in a cell-type specific manner. Decreases NF-kappa-B DNA-binding activity and inhibits NF-kappa-B-mediated transcription from the IL6 promoter and displace RELA/p65 and associated coregulators from the promoter. Recruited to the NF-kappa-B response element of the CCL2 and IL8 promoters and can displace CREBBP. Present with NF-kappa-B components RELA/p65 and NFKB1/p50 on ERE sequences. Can also act synergistically with NF-kappa-B to activate transcription involving respective recruitment adjacent response elements; the function involves CREBBP. Can activate the transcriptional activity of TFF1. Also mediates membrane-initiated estrogen signaling involving various kinase cascades. Essential for MTA1-mediated transcriptional regulation of BRCA1 and BCAS3. Maintains neuronal survival in response to ischemic reperfusion injury when in the presence of circulating estradiol (17-beta-estradiol/E2). This Mesocricetus auratus (Golden hamster) protein is Estrogen receptor (ESR1).